Here is a 495-residue protein sequence, read N- to C-terminus: UDP-glycosyltransferase 73C5 (495 aa).

A helical membrane pass occupies residues 146 to 162 (ILFHGMGCFCLLCMHVL). Residues serine 296, 356–358 (SPQ), 373–381 (HCGWNSTLE), and 395–398 (FADQ) each bind UDP-alpha-D-glucose. Residues 446–477 (MGESDDAKERRRRAKELGDSAHKAVEEGGSSH) are disordered. Positions 450–471 (DDAKERRRRAKELGDSAHKAVE) are enriched in basic and acidic residues.

This sequence belongs to the UDP-glycosyltransferase family. As to expression, elongating hypocotyls and root-specific. Expressed in the vascular system, in meristematic tissues of the root tip, and in the vasculature of the hypocotyl right after germination. In late stage of flower development, expressed in petals, and in abscission zones.

It localises to the membrane. Its function is as follows. Specifically catalyzes 23-O-glucosylation of brassinosteroids, resulting probably in their inactivation. Also, involved in the O-glucosylation of trans-zeatin and dihydrozeatin. Active in vitro on cis-zeatin, dihydrozeatin-9-N-Glc, and olomoucine. Also involved in the detoxification of the Fusarium mycotoxin deoxynivalenol by the transfer of glucose from UDP-glucose to the hydroxyl group at C-3. Possesses low quercetin 7-O-glucosyltransferase and 4'-O-glucosyltransferase activities in vitro. In Arabidopsis thaliana (Mouse-ear cress), this protein is UDP-glycosyltransferase 73C5 (UGT73C5).